Here is a 378-residue protein sequence, read N- to C-terminus: Alginate lyase (378 aa).

Residues 1-28 form the signal peptide; sequence MQTPKLIRPTLLSMAIVSSMAWATGASA. Substrate is bound by residues 67 to 68, 140 to 141, and Tyr-258; these read SK and HT.

This sequence belongs to the polysaccharide lyase 5 family.

It localises to the periplasm. The enzyme catalyses Eliminative cleavage of alginate to give oligosaccharides with 4-deoxy-alpha-L-erythro-hex-4-enuronosyl groups at their non-reducing ends and beta-D-mannuronate at their reducing end.. In terms of biological role, catalyzes the depolymerization of alginate by cleaving the beta-1,4 glycosidic bond between two adjacent sugar residues via a beta-elimination mechanism. May serve to degrade mislocalized alginate that is trapped in the periplasmic space. In Pseudomonas syringae pv. tomato (strain ATCC BAA-871 / DC3000), this protein is Alginate lyase.